We begin with the raw amino-acid sequence, 127 residues long: Gamma-synuclein (127 aa).

Repeat copies occupy residues 20–30 (EKTKQGVTEAA) and 31–41 (EKTKEGVMYVG). Residues 20 to 67 (EKTKQGVTEAAEKTKEGVMYVGTKTKENVVHSVTSVAEKTKEQANAVS) form a 4 X 11 AA tandem repeats of [EGSA]-K-T-K-[EQ]-[GQ]-V-X(4) region. The stretch at 42-56 (TKTKENVVHSVTSVA) is one 3; approximate repeat. Residues 57–67 (EKTKEQANAVS) form repeat 4. Phosphoserine is present on residues S67 and S72. The segment at 97–127 (KEDLKPSAPQQEGEAAKEKEEVAEEAQSGGD) is disordered. At S124 the chain carries Phosphoserine; by BARK1, CaMK2 and CK2.

Belongs to the synuclein family. May be a centrosome-associated protein. Interacts with MYOC; affects its secretion and its aggregation. Phosphorylated. Phosphorylation by GRK5 appears to occur on residues distinct from the residue phosphorylated by other kinases.

It localises to the cytoplasm. The protein localises to the perinuclear region. Its subcellular location is the cytoskeleton. It is found in the microtubule organizing center. The protein resides in the centrosome. It localises to the spindle. Its function is as follows. Plays a role in neurofilament network integrity. May be involved in modulating axonal architecture during development and in the adult. In vitro, increases the susceptibility of neurofilament-H to calcium-dependent proteases. May also function in modulating the keratin network in skin. Activates the MAPK and Elk-1 signal transduction pathway. The chain is Gamma-synuclein (SNCG) from Macaca fascicularis (Crab-eating macaque).